A 62-amino-acid chain; its full sequence is Alpha-conotoxin-like Ca1.1 (62 aa).

The signal sequence occupies residues 1–21; it reads MGMRMMFTVFLLVVLATTVVS. The propeptide occupies 22-46; that stretch reads FTSDRASDGRNAAANAFDLIALIAR. At Gln47 the chain carries Pyrrolidone carboxylic acid. Cystine bridges form between Cys49–Cys55 and Cys50–Cys61.

The protein belongs to the conotoxin A superfamily. In terms of tissue distribution, expressed by the venom duct.

The protein localises to the secreted. Functionally, alpha-conotoxins act on postsynaptic membranes, they bind to the nicotinic acetylcholine receptors (nAChR) and thus inhibit them. The protein is Alpha-conotoxin-like Ca1.1 of Conus caracteristicus (Characteristic cone).